A 180-amino-acid chain; its full sequence is ATP-dependent protease subunit HslV (180 aa).

T7 is an active-site residue. Na(+)-binding residues include A163, C166, and T169.

Belongs to the peptidase T1B family. HslV subfamily. As to quaternary structure, a double ring-shaped homohexamer of HslV is capped on each side by a ring-shaped HslU homohexamer. The assembly of the HslU/HslV complex is dependent on binding of ATP.

The protein localises to the cytoplasm. It carries out the reaction ATP-dependent cleavage of peptide bonds with broad specificity.. Allosterically activated by HslU binding. Its function is as follows. Protease subunit of a proteasome-like degradation complex believed to be a general protein degrading machinery. The protein is ATP-dependent protease subunit HslV of Cytophaga hutchinsonii (strain ATCC 33406 / DSM 1761 / CIP 103989 / NBRC 15051 / NCIMB 9469 / D465).